We begin with the raw amino-acid sequence, 395 residues long: DNA polymerase IV (395 aa).

In terms of domain architecture, UmuC spans 7–187 (FFHVDIDAFF…LPLKDVWGVG (181 aa)). Mg(2+)-binding residues include D11 and D105. E106 is an active-site residue.

This sequence belongs to the DNA polymerase type-Y family. Monomer. Mg(2+) serves as cofactor.

The protein resides in the cytoplasm. The catalysed reaction is DNA(n) + a 2'-deoxyribonucleoside 5'-triphosphate = DNA(n+1) + diphosphate. Its function is as follows. Poorly processive, error-prone DNA polymerase involved in untargeted mutagenesis. Copies undamaged DNA at stalled replication forks, which arise in vivo from mismatched or misaligned primer ends. These misaligned primers can be extended by PolIV. Exhibits no 3'-5' exonuclease (proofreading) activity. May be involved in translesional synthesis, in conjunction with the beta clamp from PolIII. The chain is DNA polymerase IV from Treponema denticola (strain ATCC 35405 / DSM 14222 / CIP 103919 / JCM 8153 / KCTC 15104).